Reading from the N-terminus, the 255-residue chain is 3-deoxy-manno-octulosonate cytidylyltransferase (255 aa).

Belongs to the KdsB family.

It is found in the cytoplasm. It catalyses the reaction 3-deoxy-alpha-D-manno-oct-2-ulosonate + CTP = CMP-3-deoxy-beta-D-manno-octulosonate + diphosphate. It functions in the pathway nucleotide-sugar biosynthesis; CMP-3-deoxy-D-manno-octulosonate biosynthesis; CMP-3-deoxy-D-manno-octulosonate from 3-deoxy-D-manno-octulosonate and CTP: step 1/1. The protein operates within bacterial outer membrane biogenesis; lipopolysaccharide biosynthesis. Its function is as follows. Activates KDO (a required 8-carbon sugar) for incorporation into bacterial lipopolysaccharide in Gram-negative bacteria. This is 3-deoxy-manno-octulosonate cytidylyltransferase from Polaromonas sp. (strain JS666 / ATCC BAA-500).